Consider the following 471-residue polypeptide: ATP synthase subunit beta (471 aa).

Gly-153–Thr-160 contributes to the ATP binding site.

It belongs to the ATPase alpha/beta chains family. F-type ATPases have 2 components, CF(1) - the catalytic core - and CF(0) - the membrane proton channel. CF(1) has five subunits: alpha(3), beta(3), gamma(1), delta(1), epsilon(1). CF(0) has four main subunits: a(1), b(1), b'(1) and c(9-12).

The protein resides in the cell membrane. It catalyses the reaction ATP + H2O + 4 H(+)(in) = ADP + phosphate + 5 H(+)(out). Its function is as follows. Produces ATP from ADP in the presence of a proton gradient across the membrane. The catalytic sites are hosted primarily by the beta subunits. The sequence is that of ATP synthase subunit beta from Chloroflexus aurantiacus (strain ATCC 29364 / DSM 637 / Y-400-fl).